We begin with the raw amino-acid sequence, 909 residues long: DNA mismatch repair protein MutS (909 aa).

Over residues 275–290 (QKAERPPLSRPEREEQ) the composition is skewed to basic and acidic residues. Residues 275 to 295 (QKAERPPLSRPEREEQGSTLF) are disordered. 661-668 (GPNMGGKS) contributes to the ATP binding site.

It belongs to the DNA mismatch repair MutS family.

This protein is involved in the repair of mismatches in DNA. It is possible that it carries out the mismatch recognition step. This protein has a weak ATPase activity. The chain is DNA mismatch repair protein MutS from Mesorhizobium japonicum (strain LMG 29417 / CECT 9101 / MAFF 303099) (Mesorhizobium loti (strain MAFF 303099)).